Reading from the N-terminus, the 388-residue chain is Dual-specificity RNA methyltransferase RlmN (388 aa).

The Proton acceptor role is filled by Glu-109. A Radical SAM core domain is found at 115 to 354 (EDDRATLCVS…TIVRKTRGDD (240 aa)). A disulfide bridge connects residues Cys-122 and Cys-359. 3 residues coordinate [4Fe-4S] cluster: Cys-129, Cys-133, and Cys-136. Residues 183–184 (GE), Ser-215, 237–239 (SLH), and Asn-316 each bind S-adenosyl-L-methionine. Cys-359 acts as the S-methylcysteine intermediate in catalysis.

This sequence belongs to the radical SAM superfamily. RlmN family. Requires [4Fe-4S] cluster as cofactor.

Its subcellular location is the cytoplasm. The enzyme catalyses adenosine(2503) in 23S rRNA + 2 reduced [2Fe-2S]-[ferredoxin] + 2 S-adenosyl-L-methionine = 2-methyladenosine(2503) in 23S rRNA + 5'-deoxyadenosine + L-methionine + 2 oxidized [2Fe-2S]-[ferredoxin] + S-adenosyl-L-homocysteine. It catalyses the reaction adenosine(37) in tRNA + 2 reduced [2Fe-2S]-[ferredoxin] + 2 S-adenosyl-L-methionine = 2-methyladenosine(37) in tRNA + 5'-deoxyadenosine + L-methionine + 2 oxidized [2Fe-2S]-[ferredoxin] + S-adenosyl-L-homocysteine. Specifically methylates position 2 of adenine 2503 in 23S rRNA and position 2 of adenine 37 in tRNAs. m2A2503 modification seems to play a crucial role in the proofreading step occurring at the peptidyl transferase center and thus would serve to optimize ribosomal fidelity. The protein is Dual-specificity RNA methyltransferase RlmN of Salmonella typhi.